A 466-amino-acid chain; its full sequence is Siroheme synthase (466 aa).

The segment at 1 to 203 (MNYLPIFIDI…GKIQEAKADL (203 aa)) is precorrin-2 dehydrogenase /sirohydrochlorin ferrochelatase. NAD(+) contacts are provided by residues 22 to 23 (SI) and 43 to 44 (KS). Position 128 is a phosphoserine (Ser128). Positions 216-466 (GAVYLVGGGP…FDAKPISSKK (251 aa)) are uroporphyrinogen-III C-methyltransferase. S-adenosyl-L-methionine is bound at residue Pro225. The Proton acceptor role is filled by Asp248. The active-site Proton donor is the Lys270. Residues 301-303 (GGD), Ile306, 331-332 (TA), Met383, and Gly412 each bind S-adenosyl-L-methionine.

In the N-terminal section; belongs to the precorrin-2 dehydrogenase / sirohydrochlorin ferrochelatase family. This sequence in the C-terminal section; belongs to the precorrin methyltransferase family.

It catalyses the reaction uroporphyrinogen III + 2 S-adenosyl-L-methionine = precorrin-2 + 2 S-adenosyl-L-homocysteine + H(+). The catalysed reaction is precorrin-2 + NAD(+) = sirohydrochlorin + NADH + 2 H(+). It carries out the reaction siroheme + 2 H(+) = sirohydrochlorin + Fe(2+). It participates in cofactor biosynthesis; adenosylcobalamin biosynthesis; precorrin-2 from uroporphyrinogen III: step 1/1. It functions in the pathway cofactor biosynthesis; adenosylcobalamin biosynthesis; sirohydrochlorin from precorrin-2: step 1/1. Its pathway is porphyrin-containing compound metabolism; siroheme biosynthesis; precorrin-2 from uroporphyrinogen III: step 1/1. The protein operates within porphyrin-containing compound metabolism; siroheme biosynthesis; siroheme from sirohydrochlorin: step 1/1. It participates in porphyrin-containing compound metabolism; siroheme biosynthesis; sirohydrochlorin from precorrin-2: step 1/1. Its function is as follows. Multifunctional enzyme that catalyzes the SAM-dependent methylations of uroporphyrinogen III at position C-2 and C-7 to form precorrin-2 via precorrin-1. Then it catalyzes the NAD-dependent ring dehydrogenation of precorrin-2 to yield sirohydrochlorin. Finally, it catalyzes the ferrochelation of sirohydrochlorin to yield siroheme. This Vesicomyosocius okutanii subsp. Calyptogena okutanii (strain HA) protein is Siroheme synthase.